The sequence spans 495 residues: Trimethylamine methyltransferase MttB (495 aa).

A non-standard amino acid (pyrrolysine) is located at residue pyrrolysine 334.

The protein belongs to the trimethylamine methyltransferase family.

It catalyses the reaction Co(I)-[trimethylamine-specific corrinoid protein] + trimethylamine + H(+) = methyl-Co(III)-[trimethylamine-specific corrinoid protein] + dimethylamine. The protein operates within one-carbon metabolism; methanogenesis from trimethylamine. Catalyzes the transfer of a methyl group from trimethylamine to the corrinoid cofactor of MttC. The polypeptide is Trimethylamine methyltransferase MttB (mttB) (Methanosarcina barkeri (strain Fusaro / DSM 804)).